Consider the following 282-residue polypeptide: Pantothenate synthetase (282 aa).

30-37 (MGYLHEGH) is a binding site for ATP. The active-site Proton donor is His37. Gln61 is a (R)-pantoate binding site. A beta-alanine-binding site is contributed by Gln61. Residue 147 to 150 (GQKD) coordinates ATP. Gln153 provides a ligand contact to (R)-pantoate. ATP-binding positions include Val176 and 184 to 187 (MSSR).

Belongs to the pantothenate synthetase family. In terms of assembly, homodimer.

It localises to the cytoplasm. It catalyses the reaction (R)-pantoate + beta-alanine + ATP = (R)-pantothenate + AMP + diphosphate + H(+). It participates in cofactor biosynthesis; (R)-pantothenate biosynthesis; (R)-pantothenate from (R)-pantoate and beta-alanine: step 1/1. Catalyzes the condensation of pantoate with beta-alanine in an ATP-dependent reaction via a pantoyl-adenylate intermediate. This Caldicellulosiruptor bescii (strain ATCC BAA-1888 / DSM 6725 / KCTC 15123 / Z-1320) (Anaerocellum thermophilum) protein is Pantothenate synthetase.